Consider the following 615-residue polypeptide: Mitogen-activated protein kinase 18 (615 aa).

The Protein kinase domain occupies 25–316; the sequence is YRILEVIGKG…PAEALADPYF (292 aa). ATP-binding positions include 31–39 and lysine 54; that span reads IGKGSYGVV. The active-site Proton acceptor is the aspartate 151. Threonine 187 carries the post-translational modification Phosphothreonine. The TXY motif lies at 187–189; the sequence is TDY. Tyrosine 189 bears the Phosphotyrosine mark. Threonine 192 is subject to Phosphothreonine. Disordered regions lie at residues 414–483 and 510–544; these read RSTV…ESSV and NTMT…PPAA. Residues 415–426 are compositionally biased toward low complexity; that stretch reads STVHSTVVHSTS. Residues 445–459 are compositionally biased toward polar residues; sequence NGASSAGHPSTSAYP. The segment covering 464-473 has biased composition (pro residues); sequence GPPPRVPPSG. Composition is skewed to polar residues over residues 510-522 and 532-544; these read NTMT…NIEA and PVHQ…PPAA.

It belongs to the protein kinase superfamily. CMGC Ser/Thr protein kinase family. MAP kinase subfamily. As to quaternary structure, interacts with PHS1. Binds to MAPKKK20. Post-translationally, dually phosphorylated on Thr-187 and Tyr-189, which activates the enzyme. Phosphorylated by MAPKKK20. As to expression, expressed in roots, seedlings, leaves, flower buds, flowers and siliques.

The protein localises to the nucleus. The protein resides in the cytoplasm. It catalyses the reaction L-seryl-[protein] + ATP = O-phospho-L-seryl-[protein] + ADP + H(+). It carries out the reaction L-threonyl-[protein] + ATP = O-phospho-L-threonyl-[protein] + ADP + H(+). Activated by threonine and tyrosine phosphorylation. Inactivated by phosphatase PHS1. Its function is as follows. Mitogen-activated protein kinase (MAPK) that is specifically regulated by PHS1 and MAPKKK20 and mediates signaling that regulates cortical microtubule functions, maybe through regulation of microtubule dynamic instability. The sequence is that of Mitogen-activated protein kinase 18 from Arabidopsis thaliana (Mouse-ear cress).